We begin with the raw amino-acid sequence, 711 residues long: Polyribonucleotide nucleotidyltransferase (711 aa).

The Mg(2+) site is built by D490 and D496. One can recognise a KH domain in the interval 557–619; that stretch reads PRIETMTIPK…KCIDDAMRII (63 aa). The S1 motif domain occupies 629–699; sequence GEVYVGKVRS…KTGKFKLSHK (71 aa).

Belongs to the polyribonucleotide nucleotidyltransferase family. It depends on Mg(2+) as a cofactor.

The protein resides in the cytoplasm. The enzyme catalyses RNA(n+1) + phosphate = RNA(n) + a ribonucleoside 5'-diphosphate. Involved in mRNA degradation. Catalyzes the phosphorolysis of single-stranded polyribonucleotides processively in the 3'- to 5'-direction. The polypeptide is Polyribonucleotide nucleotidyltransferase (Phocaeicola vulgatus (strain ATCC 8482 / DSM 1447 / JCM 5826 / CCUG 4940 / NBRC 14291 / NCTC 11154) (Bacteroides vulgatus)).